A 470-amino-acid chain; its full sequence is Trigger factor (470 aa).

The PPIase FKBP-type domain occupies 164 to 243 (GDYVVIDMTA…VTAVKVQELP (80 aa)). 2 stretches are compositionally biased toward acidic residues: residues 424–438 (ETDA…ESVE) and 445–470 (AEDD…AAKA). Residues 424 to 470 (ETDAEDAAEGVESVEVDLSAAAEDDAEETSDEPAAEDTATEDEAAKA) are disordered.

This sequence belongs to the FKBP-type PPIase family. Tig subfamily.

Its subcellular location is the cytoplasm. The catalysed reaction is [protein]-peptidylproline (omega=180) = [protein]-peptidylproline (omega=0). Involved in protein export. Acts as a chaperone by maintaining the newly synthesized protein in an open conformation. Functions as a peptidyl-prolyl cis-trans isomerase. The sequence is that of Trigger factor from Beutenbergia cavernae (strain ATCC BAA-8 / DSM 12333 / CCUG 43141 / JCM 11478 / NBRC 16432 / NCIMB 13614 / HKI 0122).